The following is a 104-amino-acid chain: MYAIIKNGGKQYKVKEGEVVKLEKFDLGIGEKVEFDTVLMGQTAAGEVKIGAPTVAGAKVVGEVVEQGRHKKVKIMKFRRRKHSMKQQGHRQYFTAVKVSSISL.

It belongs to the bacterial ribosomal protein bL21 family. In terms of assembly, part of the 50S ribosomal subunit. Contacts protein L20.

Its function is as follows. This protein binds to 23S rRNA in the presence of protein L20. In Francisella tularensis subsp. holarctica (strain FTNF002-00 / FTA), this protein is Large ribosomal subunit protein bL21.